Consider the following 3083-residue polypeptide: Genome polyprotein (3083 aa).

The region spanning 173 to 313 (IVCVDDVNNL…VLFYSDVEHY (141 aa)) is the Peptidase S30 domain. Ser267 (for P1 proteinase activity) is an active-site residue. The short motif at 365-368 (KLSC) is the Involved in interaction with stylet and aphid transmission element. Residues 621 to 623 (PTK) carry the Involved in virions binding and aphid transmission motif. The Peptidase C6 domain maps to 647–769 (MYIAKEGYCY…QSEMKHYRVG (123 aa)). Residues Cys655 and His728 each act as for helper component proteinase activity in the active site. The region spanning 1239–1391 (EIASSSEGEF…TQFAVKVKTE (153 aa)) is the Helicase ATP-binding domain. Residue 1252 to 1259 (GAVGSGKS) participates in ATP binding. A DECH box motif is present at residues 1341–1344 (DECH). Positions 1410 to 1569 (DMVQHGNNIL…GLSVTTHGVS (160 aa)) constitute a Helicase C-terminal domain. Positions 1894–1903 (KRGKVKGNNS) match the Nuclear localization signal motif. Tyr1918 bears the O-(5'-phospho-RNA)-tyrosine mark. The 219-residue stretch at 2045–2263 (SKSIYKGVRD…IAWGSLNLVD (219 aa)) folds into the Peptidase C4 domain. Catalysis depends on for nuclear inclusion protein A activity residues His2090, Asp2125, and Cys2195. Positions 2529–2653 (WLYCHADGSQ…AVKDEDSGLL (125 aa)) constitute a RdRp catalytic domain. The disordered stretch occupies residues 2808-2855 (QTREAGAGASKKDKDEDKDKKKDVASSSASEKAVATATKDKDVNAGSH). Residues 2817–2831 (SKKDKDEDKDKKKDV) show a composition bias toward basic and acidic residues. Low complexity predominate over residues 2832–2844 (ASSSASEKAVATA). Phosphothreonine is present on Thr3065.

Belongs to the potyviridae genome polyprotein family. As to quaternary structure, interacts with host eIF4E protein (via cap-binding region); this interaction mediates the translation of the VPg-viral RNA conjugates. Part of a complex that comprises VPg, RNA, host EIF4E and EIF4G; this interaction mediates the translation of the VPg-viral RNA conjugates. Post-translationally, VPg is uridylylated by the polymerase and is covalently attached to the 5'-end of the genomic RNA. This uridylylated form acts as a nucleotide-peptide primer for the polymerase. Potyviral RNA is expressed as two polyproteins which undergo post-translational proteolytic processing. Genome polyprotein is processed by NIa-pro, P1 and HC-pro proteinases resulting in the production of at least ten individual proteins. P3N-PIPO polyprotein is cleaved by P1 and HC-pro proteinases resulting in the production of three individual proteins. The P1 proteinase and the HC-pro cleave only their respective C-termini autocatalytically. 6K1 is essential for proper proteolytic separation of P3 from CI.

Its subcellular location is the host cytoplasmic vesicle. It is found in the host nucleus. The protein localises to the virion. It catalyses the reaction RNA(n) + a ribonucleoside 5'-triphosphate = RNA(n+1) + diphosphate. The catalysed reaction is Hydrolyzes glutaminyl bonds, and activity is further restricted by preferences for the amino acids in P6 - P1' that vary with the species of potyvirus, e.g. Glu-Xaa-Xaa-Tyr-Xaa-Gln-|-(Ser or Gly) for the enzyme from tobacco etch virus. The natural substrate is the viral polyprotein, but other proteins and oligopeptides containing the appropriate consensus sequence are also cleaved.. It carries out the reaction Hydrolyzes a Gly-|-Gly bond at its own C-terminus, commonly in the sequence -Tyr-Xaa-Val-Gly-|-Gly, in the processing of the potyviral polyprotein.. Functionally, required for aphid transmission and also has proteolytic activity. Only cleaves a Gly-Gly dipeptide at its own C-terminus. Interacts with virions and aphid stylets. Acts as a suppressor of RNA-mediated gene silencing, also known as post-transcriptional gene silencing (PTGS), a mechanism of plant viral defense that limits the accumulation of viral RNAs. May have RNA-binding activity. Has helicase activity. It may be involved in replication. Its function is as follows. Indispensable for virus replication. Reduces the abundance of host transcripts related to jasmonic acid biosynthesis therefore altering the host defenses. In order to increase its own stability, decreases host protein degradation pathways. In terms of biological role, indispensable for virus replication. Functionally, mediates the cap-independent, EIF4E-dependent translation of viral genomic RNAs. Binds to the cap-binding site of host EIF4E and thus interferes with the host EIF4E-dependent mRNA export and translation. VPg-RNA directly binds EIF4E and is a template for transcription. Also forms trimeric complexes with EIF4E-EIF4G, which are templates for translation. Has RNA-binding and proteolytic activities. Its function is as follows. An RNA-dependent RNA polymerase that plays an essential role in the virus replication. In terms of biological role, involved in aphid transmission, cell-to-cell and systemis movement, encapsidation of the viral RNA and in the regulation of viral RNA amplification. This is Genome polyprotein from Zucchini yellow mosaic virus (strain Singapore) (ZYMV).